The chain runs to 542 residues: uncharacterized protein (542 aa).

A run of 5 helical transmembrane segments spans residues 4–23, 28–47, 51–70, 91–113, and 160–182; these read FVEN…LLLG, FGFR…FSTI, ITVP…YTIG, LALG…LGLA, and YSLT…GGLF. 2 consecutive RCK C-terminal domains span residues 190–272 and 274–355; these read AKNA…LLGE and VDGH…IFGD. The next 5 helical transmembrane spans lie at 363–385, 390–412, 425–447, 457–479, and 519–541; these read FNLV…EFPL, ALSL…MGRT, LALR…GAGF, LLII…VIGH, and YTSV…LFLL.

The protein belongs to the AAE transporter (TC 2.A.81) family.

Its subcellular location is the cell membrane. This is an uncharacterized protein from Corynebacterium efficiens (strain DSM 44549 / YS-314 / AJ 12310 / JCM 11189 / NBRC 100395).